The chain runs to 348 residues: Thioesterase-like protein TwmA (348 aa).

It functions in the pathway secondary metabolite biosynthesis. Thioesterase-like protein; part of the gene cluster that mediates the biosynthesis of wortmanamides A and B, reduced long-chain polyketides amidated with a specific omega-amino acid, 5-aminopentanoic acid (5PA). The PKS modules of TwmB are involved in the synthesis of the polyketide backbone, whereas the non-canonical C domain of TwmB is a bonafide condensation domain that specifically selects 5PA and catalyzes amidation to release polyketide chain. The C domain clearly prefers C16 and C18 fatty acyl substrates, which is consistent with simultaneous formation of both octaketide and nonaketide acyl amides wortmanamides A and B. Because TwmB lacks a designated enoylreductase (ER) domain, the required activity is provided the enoyl reductase TwmE. The roles of the remaining enzymes have still to be clarified. This chain is Thioesterase-like protein TwmA, found in Talaromyces wortmannii (Penicillium wortmannii).